Here is a 751-residue protein sequence, read N- to C-terminus: Semaphorin-3C (751 aa).

Positions 1–21 are cleaved as a signal peptide; sequence MAFQAVCILVGVFVCSTYVKG. The Sema domain occupies 28 to 511; it reads RVYLTFDELR…SNEGLAQVSL (484 aa). A glycan (N-linked (GlcNAc...) asparagine) is linked at Asn-81. An intrachain disulfide couples Cys-101 to Cys-112. Asn-123 carries N-linked (GlcNAc...) asparagine glycosylation. 3 cysteine pairs are disulfide-bonded: Cys-130–Cys-139, Cys-266–Cys-378, and Cys-290–Cys-338. Asn-268 carries N-linked (GlcNAc...) asparagine glycosylation. An N-linked (GlcNAc...) asparagine glycan is attached at Asn-465. Cys-514 and Cys-532 form a disulfide bridge. The Ig-like C2-type domain occupies 571–655; it reads AYRNAAEIVQ…TENSFKQTIA (85 aa). N-linked (GlcNAc...) asparagine glycosylation is found at Asn-585 and Asn-586. Cys-592 and Cys-643 are disulfide-bonded. Positions 712-731 are enriched in basic and acidic residues; that stretch reads TRQQHQQGEESQKMRGDYGK. The segment at 712 to 751 is disordered; sequence TRQQHQQGEESQKMRGDYGKLKALINSRKSRNRRNQLPES.

The protein belongs to the semaphorin family. In terms of assembly, interacts with PLXND1.

Its subcellular location is the secreted. Its function is as follows. Binds to plexin family members and plays an important role in the regulation of developmental processes. Required for normal cardiovascular development during embryogenesis. Functions as attractant for growing axons, and thereby plays an important role in axon growth and axon guidance. This is Semaphorin-3C (SEMA3C) from Bos taurus (Bovine).